The primary structure comprises 481 residues: Phosphatidylinositol 4-kinase type 2-beta (481 aa).

Basic and acidic residues predominate over residues 1 to 11 (MEDPSEPDRLA). Residues 1–82 (MEDPSEPDRL…VSRSSSAELD (82 aa)) are disordered. A phosphoserine mark is found at Ser-12, Ser-17, and Ser-45. Positions 53–64 (AGEEGEAGDEEL) are enriched in acidic residues. The PI3K/PI4K catalytic domain occupies 120-451 (GIFPERISQG…VQIPCVIVER (332 aa)). A G-loop region spans residues 126-132 (ISQGSSG). The ATP site is built by Ser-133 and Lys-148. The tract at residues 153-155 (EPY) is important for substrate binding. The interval 161-174 (KWTKYVHKVCCPCC) is important for interaction with membranes. Residues 257 to 260 (QLFV) and 271 to 272 (RK) contribute to the ATP site. Positions 264-272 (KEAEYWLRK) are important for interaction with membranes. Residues 301-309 (RNTDRGNDN) form a catalytic loop region. Residues 342-362 (AIDNGLAFPFKHPDEWRAYPF) are activation loop. ATP is bound at residue Asp-344. The segment at 357 to 366 (WRAYPFHWAW) is important for interaction with membranes.

It belongs to the PI3/PI4-kinase family. Type II PI4K subfamily. In terms of tissue distribution, widely expressed.

It localises to the cytoplasm. Its subcellular location is the cytosol. It is found in the golgi apparatus membrane. The protein resides in the endoplasmic reticulum membrane. The protein localises to the cell membrane. It localises to the early endosome membrane. The enzyme catalyses a 1,2-diacyl-sn-glycero-3-phospho-(1D-myo-inositol) + ATP = a 1,2-diacyl-sn-glycero-3-phospho-(1D-myo-inositol 4-phosphate) + ADP + H(+). Its activity is regulated as follows. Inhibited by phenylarsine oxide and adenosine. Activation through membrane association is stimulated by active RAC1. In terms of biological role, together with PI4K2A and the type III PI4Ks (PIK4CA and PIK4CB) it contributes to the overall PI4-kinase activity of the cell. This contribution may be especially significant in plasma membrane, endosomal and Golgi compartments. The phosphorylation of phosphatidylinositol (PI) to PI4P is the first committed step in the generation of phosphatidylinositol 4,5-bisphosphate (PIP2), a precursor of the second messenger inositol 1,4,5-trisphosphate (InsP3). Contributes to the production of InsP3 in stimulated cells and is likely to be involved in the regulation of vesicular trafficking. The chain is Phosphatidylinositol 4-kinase type 2-beta (PI4K2B) from Homo sapiens (Human).